A 228-amino-acid chain; its full sequence is Probable septum site-determining protein MinC (228 aa).

This sequence belongs to the MinC family. In terms of assembly, interacts with MinD and FtsZ.

Its function is as follows. Cell division inhibitor that blocks the formation of polar Z ring septums. Rapidly oscillates between the poles of the cell to destabilize FtsZ filaments that have formed before they mature into polar Z rings. Prevents FtsZ polymerization. The protein is Probable septum site-determining protein MinC of Bacillus cereus (strain B4264).